A 197-amino-acid chain; its full sequence is Methylamine utilization protein MauD (197 aa).

The chain crosses the membrane as a helical span at residues 3 to 23 (FLIASNILLWIAFLGVTVVML). A Thioredoxin domain is found at 48–180 (PDIGDMAPEF…LESLLEADKT (133 aa)).

The protein localises to the membrane. It functions in the pathway one-carbon metabolism; methylamine degradation. Its function is as follows. May be specifically involved in the processing, transport, and/or maturation of the MADH beta-subunit. This is Methylamine utilization protein MauD (mauD) from Paracoccus versutus (Thiobacillus versutus).